A 427-amino-acid polypeptide reads, in one-letter code: Putative acyl-CoA thioester hydrolase YbhC (427 aa).

The first 21 residues, 1–21, serve as a signal peptide directing secretion; that stretch reads MNTFSVSRLALALAFGVTLTA. Cys22 is lipidated: N-palmitoyl cysteine. A lipid anchor (S-diacylglycerol cysteine) is attached at Cys22. Residues 23–42 are disordered; it reads SSTPPDQRPSDQTAPGTSSR. A disulfide bridge links Cys185 with Cys197. The Nucleophile role is filled by Asp285. Residue Arg345 coordinates substrate.

Belongs to the pectinesterase family.

The protein localises to the cell outer membrane. Its function is as follows. Putative thioesterase. Does not bind pectin, and has no pectinesterase activity. This is Putative acyl-CoA thioester hydrolase YbhC (ybhC) from Escherichia coli (strain K12).